The following is a 204-amino-acid chain: 3-isopropylmalate dehydratase small subunit (204 aa).

The protein belongs to the LeuD family. LeuD type 1 subfamily. In terms of assembly, heterodimer of LeuC and LeuD.

The catalysed reaction is (2R,3S)-3-isopropylmalate = (2S)-2-isopropylmalate. It functions in the pathway amino-acid biosynthesis; L-leucine biosynthesis; L-leucine from 3-methyl-2-oxobutanoate: step 2/4. Its function is as follows. Catalyzes the isomerization between 2-isopropylmalate and 3-isopropylmalate, via the formation of 2-isopropylmaleate. The chain is 3-isopropylmalate dehydratase small subunit from Psychromonas ingrahamii (strain DSM 17664 / CCUG 51855 / 37).